We begin with the raw amino-acid sequence, 190 residues long: Remorin (190 aa).

Over residues M1–V12 the composition is skewed to basic and acidic residues. Disordered regions lie at residues M1–K45 and V50–R69. Position 14 is a phosphoserine (S14). A Phosphothreonine modification is found at T58. Positions E92–I147 form a coiled coil.

It belongs to the remorin family. May polymerize to form filamentous structures. In terms of tissue distribution, expressed in roots, leaves, stems, flowers and siliques, with a maximal expression in apical regions.

Exhibits a non sequence-specific DNA-binding activity. This Arabidopsis thaliana (Mouse-ear cress) protein is Remorin (DBP).